The chain runs to 281 residues: Diaminopimelate epimerase (281 aa).

Substrate-binding residues include Asn-14 and Asn-65. The Proton donor role is filled by Cys-74. Substrate-binding positions include 75–76 (GN), Asn-165, Asn-198, and 216–217 (ER). Cys-225 (proton acceptor) is an active-site residue. 226 to 227 (GT) contributes to the substrate binding site.

Belongs to the diaminopimelate epimerase family. In terms of assembly, homodimer.

The protein localises to the cytoplasm. The enzyme catalyses (2S,6S)-2,6-diaminopimelate = meso-2,6-diaminopimelate. The protein operates within amino-acid biosynthesis; L-lysine biosynthesis via DAP pathway; DL-2,6-diaminopimelate from LL-2,6-diaminopimelate: step 1/1. In terms of biological role, catalyzes the stereoinversion of LL-2,6-diaminopimelate (L,L-DAP) to meso-diaminopimelate (meso-DAP), a precursor of L-lysine and an essential component of the bacterial peptidoglycan. The chain is Diaminopimelate epimerase from Leptospira borgpetersenii serovar Hardjo-bovis (strain JB197).